We begin with the raw amino-acid sequence, 360 residues long: MNRLGELWVLTTFGESHGAGIGCVLDGVPAGLRVDEEFLNLELSRRRPGQSLYSTPRKESDRVEILSGVMEGFTTGTPLAMFIPNENQKSSDYESIRSIFRPGHADFTYHYKYGLRDHRGGGRSSARETAARVAGGAVAKMFLKELGISIFSGVFQVGEHTSDVRDFAHARKSVVNALDPLMEELFKEEIEKARGAHDSIGGAIEVRAKGMPIGLGEPLYHKLDGALGGALMGLNAVKAVEIGEGLSAARLKGSENNDPLRLEGFKSNHAGGILGGISNGSELVARVYFKPTPSIFLPQETLNEEGDEVICALKGRHDPCVAIRGGVVCEALVALVLADMALLRLGNRLQDVKEFYGKGR.

Residue Arg46 coordinates NADP(+). FMN-binding positions include 123-125 (RSS), 235-236 (NA), Gly275, 290-294 (KPTPS), and Arg316.

It belongs to the chorismate synthase family. In terms of assembly, homotetramer. FMNH2 serves as cofactor.

It catalyses the reaction 5-O-(1-carboxyvinyl)-3-phosphoshikimate = chorismate + phosphate. Its pathway is metabolic intermediate biosynthesis; chorismate biosynthesis; chorismate from D-erythrose 4-phosphate and phosphoenolpyruvate: step 7/7. Its function is as follows. Catalyzes the anti-1,4-elimination of the C-3 phosphate and the C-6 proR hydrogen from 5-enolpyruvylshikimate-3-phosphate (EPSP) to yield chorismate, which is the branch point compound that serves as the starting substrate for the three terminal pathways of aromatic amino acid biosynthesis. This reaction introduces a second double bond into the aromatic ring system. The polypeptide is Chorismate synthase (Wolinella succinogenes (strain ATCC 29543 / DSM 1740 / CCUG 13145 / JCM 31913 / LMG 7466 / NCTC 11488 / FDC 602W) (Vibrio succinogenes)).